Reading from the N-terminus, the 462-residue chain is Chromosomal replication initiator protein DnaA (462 aa).

The interval 1-84 (MAVSLWQQCI…RFDIGSRPSA (84 aa)) is domain I, interacts with DnaA modulators. The segment at 84-125 (AKKPSVPAPIAPTRVANTQTKATVGTTFNVQAEPMANANHRS) is domain II. Residues 126 to 342 (NINPSYQFDN…GALNRVIANA (217 aa)) are domain III, AAA+ region. Residues G170, G172, K173, and T174 each contribute to the ATP site. A domain IV, binds dsDNA region spans residues 343-462 (NFTGRPITID…YANLIRTLSS (120 aa)).

The protein belongs to the DnaA family. As to quaternary structure, oligomerizes as a right-handed, spiral filament on DNA at oriC.

The protein resides in the cytoplasm. Functionally, plays an essential role in the initiation and regulation of chromosomal replication. ATP-DnaA binds to the origin of replication (oriC) to initiate formation of the DNA replication initiation complex once per cell cycle. Binds the DnaA box (a 9 base pair repeat at the origin) and separates the double-stranded (ds)DNA. Forms a right-handed helical filament on oriC DNA; dsDNA binds to the exterior of the filament while single-stranded (ss)DNA is stabiized in the filament's interior. The ATP-DnaA-oriC complex binds and stabilizes one strand of the AT-rich DNA unwinding element (DUE), permitting loading of DNA polymerase. After initiation quickly degrades to an ADP-DnaA complex that is not apt for DNA replication. Binds acidic phospholipids. The protein is Chromosomal replication initiator protein DnaA of Shewanella baltica (strain OS195).